Here is a 704-residue protein sequence, read N- to C-terminus: DNA ligase (704 aa).

NAD(+) contacts are provided by residues 43-47 (DADYD), 92-93 (SL), and Glu-124. Lys-126 (N6-AMP-lysine intermediate) is an active-site residue. Arg-147, Glu-182, Lys-298, and Lys-322 together coordinate NAD(+). Zn(2+) contacts are provided by Cys-427, Cys-430, Cys-445, and Cys-451. The BRCT domain occupies 625 to 704 (PVASPVAGKI…DGWLRLIGDA (80 aa)).

It belongs to the NAD-dependent DNA ligase family. LigA subfamily. Mg(2+) serves as cofactor. It depends on Mn(2+) as a cofactor.

It catalyses the reaction NAD(+) + (deoxyribonucleotide)n-3'-hydroxyl + 5'-phospho-(deoxyribonucleotide)m = (deoxyribonucleotide)n+m + AMP + beta-nicotinamide D-nucleotide.. Functionally, DNA ligase that catalyzes the formation of phosphodiester linkages between 5'-phosphoryl and 3'-hydroxyl groups in double-stranded DNA using NAD as a coenzyme and as the energy source for the reaction. It is essential for DNA replication and repair of damaged DNA. This Cereibacter sphaeroides (strain ATCC 17029 / ATH 2.4.9) (Rhodobacter sphaeroides) protein is DNA ligase.